A 195-amino-acid chain; its full sequence is Putative 3-methyladenine DNA glycosylase (195 aa).

It belongs to the DNA glycosylase MPG family.

This chain is Putative 3-methyladenine DNA glycosylase, found in Synechococcus sp. (strain JA-3-3Ab) (Cyanobacteria bacterium Yellowstone A-Prime).